The following is a 338-amino-acid chain: Pyridoxal 5'-phosphate synthase subunit PdxS (338 aa).

Residue Asp-66 participates in D-ribose 5-phosphate binding. Lys-123 serves as the catalytic Schiff-base intermediate with D-ribose 5-phosphate. Gly-195 is a D-ribose 5-phosphate binding site. Lys-207 provides a ligand contact to D-glyceraldehyde 3-phosphate. D-ribose 5-phosphate contacts are provided by residues Gly-256 and 277–278 (GS).

It belongs to the PdxS/SNZ family. In the presence of PdxT, forms a dodecamer of heterodimers.

It carries out the reaction aldehydo-D-ribose 5-phosphate + D-glyceraldehyde 3-phosphate + L-glutamine = pyridoxal 5'-phosphate + L-glutamate + phosphate + 3 H2O + H(+). Its pathway is cofactor biosynthesis; pyridoxal 5'-phosphate biosynthesis. Catalyzes the formation of pyridoxal 5'-phosphate from ribose 5-phosphate (RBP), glyceraldehyde 3-phosphate (G3P) and ammonia. The ammonia is provided by the PdxT subunit. Can also use ribulose 5-phosphate and dihydroxyacetone phosphate as substrates, resulting from enzyme-catalyzed isomerization of RBP and G3P, respectively. This chain is Pyridoxal 5'-phosphate synthase subunit PdxS, found in Saccharolobus islandicus (strain L.S.2.15 / Lassen #1) (Sulfolobus islandicus).